The chain runs to 338 residues: Methionine import ATP-binding protein MetN 1 (338 aa).

In terms of domain architecture, ABC transporter spans 2–241; sequence IQLENIEKHY…PNEKLTKDFI (240 aa). 38-45 serves as a coordination point for ATP; sequence GYSGAGKS.

This sequence belongs to the ABC transporter superfamily. Methionine importer (TC 3.A.1.24) family. As to quaternary structure, the complex is composed of two ATP-binding proteins (MetN), two transmembrane proteins (MetI) and a solute-binding protein (MetQ).

The protein resides in the cell membrane. The enzyme catalyses L-methionine(out) + ATP + H2O = L-methionine(in) + ADP + phosphate + H(+). The catalysed reaction is D-methionine(out) + ATP + H2O = D-methionine(in) + ADP + phosphate + H(+). In terms of biological role, part of the ABC transporter complex MetNIQ involved in methionine import. Responsible for energy coupling to the transport system. This is Methionine import ATP-binding protein MetN 1 from Oceanobacillus iheyensis (strain DSM 14371 / CIP 107618 / JCM 11309 / KCTC 3954 / HTE831).